The sequence spans 92 residues: Parbolysin P7 (92 aa).

Intrachain disulfides connect Cys15–Cys36, Cys21–Cys32, and Cys46–Cys59.

The protein belongs to the worm cytolysin family. As to expression, localized within the skin and proboscis and are most readily isolated from body mucus secretions.

The protein resides in the secreted. In terms of biological role, cytolysin that shows hemolytic activity (on bovine erythrocytes, HC(50)=5.75 mg/ml). This hemolytic activity is completely inhibited by small unilamelar vesicles composed of PC/PG, PC/PI and PC/PS in 1:1 molar ratios (with at least 100 mg/ml concentration). The chain is Parbolysin P7 from Parborlasia corrugatus (Antarctic nemertean worm).